The primary structure comprises 453 residues: 4,4'-diapolycopene-4,4'-dial dehydrogenase (453 aa).

Basic and acidic residues predominate over residues 1–20 (MPDNDSHSLKSLPERQREDL). Residues 1 to 23 (MPDNDSHSLKSLPERQREDLFSA) form a disordered region. Catalysis depends on residues E215 and C249.

The protein belongs to the aldehyde dehydrogenase family.

The enzyme catalyses all-trans-4,4'-diapolycopene-4,4'-dial + 2 A + 2 H2O = all-trans-4,4'-diapolycopene-4,4'-dioate + 2 AH2 + 2 H(+). It functions in the pathway carotenoid biosynthesis. Involved in the biosynthesis of the major C30 carotenoid 4,4'-diapolycopene-4,4'-dioic acid, which protects B.firmus from peroxidative reactions. Catalyzes the oxidation of 4,4'-diapolycopene-4,4'-dial to yield 4,4'-diapolycopene-4,4'-dioic aci. The protein is 4,4'-diapolycopene-4,4'-dial dehydrogenase of Cytobacillus firmus (Bacillus firmus).